Here is a 340-residue protein sequence, read N- to C-terminus: tRNA N6-adenosine threonylcarbamoyltransferase (340 aa).

The Fe cation site is built by histidine 111 and histidine 115. Substrate-binding positions include 134–138, aspartate 167, glycine 180, and asparagine 276; that span reads LVSGG. Aspartate 304 contributes to the Fe cation binding site.

This sequence belongs to the KAE1 / TsaD family. Fe(2+) serves as cofactor.

The protein localises to the cytoplasm. The catalysed reaction is L-threonylcarbamoyladenylate + adenosine(37) in tRNA = N(6)-L-threonylcarbamoyladenosine(37) in tRNA + AMP + H(+). In terms of biological role, required for the formation of a threonylcarbamoyl group on adenosine at position 37 (t(6)A37) in tRNAs that read codons beginning with adenine. Is involved in the transfer of the threonylcarbamoyl moiety of threonylcarbamoyl-AMP (TC-AMP) to the N6 group of A37, together with TsaE and TsaB. TsaD likely plays a direct catalytic role in this reaction. The polypeptide is tRNA N6-adenosine threonylcarbamoyltransferase (Helicobacter pylori (strain P12)).